The chain runs to 548 residues: Chaperonin GroEL (548 aa).

ATP-binding positions include Thr30–Pro33, Lys51, Asp87–Thr91, Gly415, Asn479–Ala481, and Asp495.

Belongs to the chaperonin (HSP60) family. Forms a cylinder of 14 subunits composed of two heptameric rings stacked back-to-back. Interacts with the co-chaperonin GroES.

It localises to the cytoplasm. It catalyses the reaction ATP + H2O + a folded polypeptide = ADP + phosphate + an unfolded polypeptide.. Its function is as follows. Together with its co-chaperonin GroES, plays an essential role in assisting protein folding. The GroEL-GroES system forms a nano-cage that allows encapsulation of the non-native substrate proteins and provides a physical environment optimized to promote and accelerate protein folding. This is Chaperonin GroEL from Salmonella gallinarum (strain 287/91 / NCTC 13346).